A 252-amino-acid chain; its full sequence is Putative zinc finger CCCH domain-containing protein 58 (252 aa).

The C3H1-type zinc finger occupies 35–62 (NHKSVLCMKWREGRCHNGVACRYAHGEE). 3 disordered regions span residues 71–95 (RVGG…SGST), 109–180 (RHGR…SAAD), and 215–252 (TATS…APPK). Composition is skewed to low complexity over residues 133-149 (SARS…TTPP) and 229-238 (ITTTTSSSTT).

The sequence is that of Putative zinc finger CCCH domain-containing protein 58 from Oryza sativa subsp. japonica (Rice).